A 487-amino-acid chain; its full sequence is Aspartyl/glutamyl-tRNA(Asn/Gln) amidotransferase subunit B (487 aa).

It belongs to the GatB/GatE family. GatB subfamily. In terms of assembly, heterotrimer of A, B and C subunits.

The enzyme catalyses L-glutamyl-tRNA(Gln) + L-glutamine + ATP + H2O = L-glutaminyl-tRNA(Gln) + L-glutamate + ADP + phosphate + H(+). The catalysed reaction is L-aspartyl-tRNA(Asn) + L-glutamine + ATP + H2O = L-asparaginyl-tRNA(Asn) + L-glutamate + ADP + phosphate + 2 H(+). Its function is as follows. Allows the formation of correctly charged Asn-tRNA(Asn) or Gln-tRNA(Gln) through the transamidation of misacylated Asp-tRNA(Asn) or Glu-tRNA(Gln) in organisms which lack either or both of asparaginyl-tRNA or glutaminyl-tRNA synthetases. The reaction takes place in the presence of glutamine and ATP through an activated phospho-Asp-tRNA(Asn) or phospho-Glu-tRNA(Gln). In Chlamydia caviae (strain ATCC VR-813 / DSM 19441 / 03DC25 / GPIC) (Chlamydophila caviae), this protein is Aspartyl/glutamyl-tRNA(Asn/Gln) amidotransferase subunit B.